A 124-amino-acid chain; its full sequence is Tax1-binding protein 3 (124 aa).

S2 carries the N-acetylserine modification. Positions 15–112 constitute a PDZ domain; sequence RVEIHKLRQG…EVVRLLVTRQ (98 aa). S61 bears the Phosphoserine mark.

As to quaternary structure, interacts (via its PDZ domain) with GLS2. Interacts (via its PDZ domain) with RTKN (via the C-terminal region); this interaction facilitates Rho-mediated activation of the FOS serum response element (SRE). Interacts (via PDZ domain) with ARHGEF16. Interacts (via PDZ domain) with KCNJ4 (via C-terminus). Competes with LIN7A for KCNJ4 binding. Interacts (via its PDZ domain) with CTNNB1; this interaction inhibits the transcriptional activity of CTNNB1. Interacts with ADGRB2.

Its subcellular location is the cytoplasm. The protein resides in the nucleus. It is found in the cell membrane. Its function is as follows. May regulate a number of protein-protein interactions by competing for PDZ domain binding sites. Binds CTNNB1 and may thereby act as an inhibitor of the Wnt signaling pathway. Competes with LIN7A for KCNJ4 binding, and thereby promotes KCNJ4 internalization. May play a role in the Rho signaling pathway. The sequence is that of Tax1-binding protein 3 from Mus musculus (Mouse).